Here is a 356-residue protein sequence, read N- to C-terminus: sn-glycerol-3-phosphate import ATP-binding protein UgpC (356 aa).

An ABC transporter domain is found at 4–235 (LKLQAVTKSW…PASRFVASFI (232 aa)). 37-44 (GPSGCGKS) contributes to the ATP binding site.

The protein belongs to the ABC transporter superfamily. sn-glycerol-3-phosphate importer (TC 3.A.1.1.3) family. The complex is composed of two ATP-binding proteins (UgpC), two transmembrane proteins (UgpA and UgpE) and a solute-binding protein (UgpB).

The protein resides in the cell inner membrane. The enzyme catalyses sn-glycerol 3-phosphate(out) + ATP + H2O = sn-glycerol 3-phosphate(in) + ADP + phosphate + H(+). Functionally, part of the ABC transporter complex UgpBAEC involved in sn-glycerol-3-phosphate (G3P) import. Responsible for energy coupling to the transport system. The chain is sn-glycerol-3-phosphate import ATP-binding protein UgpC from Salmonella paratyphi A (strain ATCC 9150 / SARB42).